Reading from the N-terminus, the 129-residue chain is Small ribosomal subunit protein uS11 (129 aa).

Belongs to the universal ribosomal protein uS11 family. In terms of assembly, part of the 30S ribosomal subunit. Interacts with proteins S7 and S18. Binds to IF-3.

Its function is as follows. Located on the platform of the 30S subunit, it bridges several disparate RNA helices of the 16S rRNA. Forms part of the Shine-Dalgarno cleft in the 70S ribosome. This is Small ribosomal subunit protein uS11 from Oleidesulfovibrio alaskensis (strain ATCC BAA-1058 / DSM 17464 / G20) (Desulfovibrio alaskensis).